We begin with the raw amino-acid sequence, 500 residues long: NAD(P)H-quinone oxidoreductase subunit 2, chloroplastic (500 aa).

13 consecutive transmembrane segments (helical) span residues 15-35 (ILPE…DLSL), 42-62 (WIIY…CLQW), 79-99 (FSIA…LLSI), 109-129 (LMEF…LCGA), 132-152 (LITI…LAGY), 167-187 (LLVG…LYGL), 201-221 (LIFA…CIIV), 247-267 (VVAF…IRII), 278-298 (WQFL…LVAI), 306-326 (MLAY…ISST), 334-354 (LVYM…VILF), 377-397 (ASCL…AGFF), and 400-420 (IYLF…VGLL).

It belongs to the complex I subunit 2 family. In terms of assembly, NDH is composed of at least 16 different subunits, 5 of which are encoded in the nucleus.

The protein resides in the plastid. It localises to the chloroplast thylakoid membrane. The catalysed reaction is a plastoquinone + NADH + (n+1) H(+)(in) = a plastoquinol + NAD(+) + n H(+)(out). It catalyses the reaction a plastoquinone + NADPH + (n+1) H(+)(in) = a plastoquinol + NADP(+) + n H(+)(out). Its function is as follows. NDH shuttles electrons from NAD(P)H:plastoquinone, via FMN and iron-sulfur (Fe-S) centers, to quinones in the photosynthetic chain and possibly in a chloroplast respiratory chain. The immediate electron acceptor for the enzyme in this species is believed to be plastoquinone. Couples the redox reaction to proton translocation, and thus conserves the redox energy in a proton gradient. This is NAD(P)H-quinone oxidoreductase subunit 2, chloroplastic from Chaetosphaeridium globosum (Charophycean green alga).